A 325-amino-acid chain; its full sequence is Solute-binding protein RD1_1052 (325 aa).

A signal peptide spans 1-26; it reads MRLFTKIKGLAAVTCVAALASSAAFA. Residues E75, 93–95, 148–151, R171, and N211 each bind D-mannonate; these read GES and RGPR. Residues E75, 93 to 95, 148 to 151, R171, and N211 contribute to the L-galactonate site; these read GES and RGPR.

Belongs to the bacterial solute-binding protein 7 family. The complex is comprised of an extracytoplasmic solute-binding protein and a heteromeric permease formed by two transmembrane proteins.

It localises to the periplasm. Functionally, solute-binding protein that binds L-galactonate and D-mannonate (in vitro). Probably part of a tripartite ATP-independent periplasmic (TRAP) transport system that mediates solute transport into the cytoplasm. In Roseobacter denitrificans (strain ATCC 33942 / OCh 114) (Erythrobacter sp. (strain OCh 114)), this protein is Solute-binding protein RD1_1052.